A 609-amino-acid chain; its full sequence is UvrABC system protein C (609 aa).

Residues 19 to 97 (ISPGCYLWKS…IKKHNPRFNV (79 aa)) enclose the GIY-YIG domain. Residues 208-243 (ESLVGDLSIKMSASSNRMDFEKAARYRDMLQRIQNF) enclose the UVR domain.

It belongs to the UvrC family. Interacts with UvrB in an incision complex.

The protein localises to the cytoplasm. The UvrABC repair system catalyzes the recognition and processing of DNA lesions. UvrC both incises the 5' and 3' sides of the lesion. The N-terminal half is responsible for the 3' incision and the C-terminal half is responsible for the 5' incision. The chain is UvrABC system protein C from Leptospira borgpetersenii serovar Hardjo-bovis (strain JB197).